A 245-amino-acid chain; its full sequence is Adenosylcobinamide-GDP ribazoletransferase (245 aa).

5 helical membrane-spanning segments follow: residues 35-55, 108-128, 137-157, 176-196, and 197-217; these read WFPL…ALGL, IGAF…IGAH, GVLI…AALV, IAIG…TPAI, and TTVT…HLAR.

Belongs to the CobS family. Mg(2+) serves as cofactor.

It localises to the cell inner membrane. It carries out the reaction alpha-ribazole + adenosylcob(III)inamide-GDP = adenosylcob(III)alamin + GMP + H(+). The catalysed reaction is alpha-ribazole 5'-phosphate + adenosylcob(III)inamide-GDP = adenosylcob(III)alamin 5'-phosphate + GMP + H(+). The protein operates within cofactor biosynthesis; adenosylcobalamin biosynthesis; adenosylcobalamin from cob(II)yrinate a,c-diamide: step 7/7. In terms of biological role, joins adenosylcobinamide-GDP and alpha-ribazole to generate adenosylcobalamin (Ado-cobalamin). Also synthesizes adenosylcobalamin 5'-phosphate from adenosylcobinamide-GDP and alpha-ribazole 5'-phosphate. This chain is Adenosylcobinamide-GDP ribazoletransferase, found in Nitratidesulfovibrio vulgaris (strain ATCC 29579 / DSM 644 / CCUG 34227 / NCIMB 8303 / VKM B-1760 / Hildenborough) (Desulfovibrio vulgaris).